We begin with the raw amino-acid sequence, 801 residues long: Protocadherin beta-8 (801 aa).

An N-terminal signal peptide occupies residues 1–29 (MEASGKLICRQRQVLFSFLLLGLSLAGAA). Residues 30–691 (EPRSYSVVEE…GQADSLTVYL (662 aa)) are Extracellular-facing. Cadherin domains follow at residues 36–134 (VVEE…SPVF), 139–243 (MLVK…APEF), 248–348 (YRVQ…APEV), 353–452 (FTSP…APAF), and 457–562 (YTLF…SPFV). An intrachain disulfide couples C97 to C103. N-linked (GlcNAc...) asparagine glycans are attached at residues N419 and N437. N568 carries an N-linked (GlcNAc...) asparagine glycan. The Cadherin 6 domain occupies 569–672 (GSAPCTELVP…LVDGFSQPYL (104 aa)). The helical transmembrane segment at 692–710 (VVALASVSSLFLFSVLLFV) threads the bilayer. At 711-801 (AVLLCRRSRA…NGFGFSLQLK (91 aa)) the chain is on the cytoplasmic side.

In terms of assembly, forms homodimers in trans (molecules expressed by two different cells). Forms promiscuous heterodimers in cis (at the plasma membrane of the same cell) with other protocadherins.

Its subcellular location is the cell membrane. Its function is as follows. Calcium-dependent cell-adhesion protein involved in cells self-recognition and non-self discrimination. Thereby, it is involved in the establishment and maintenance of specific neuronal connections in the brain. The polypeptide is Protocadherin beta-8 (Homo sapiens (Human)).